A 320-amino-acid chain; its full sequence is Biotin synthase (320 aa).

Residues 43–270 (GAVQKSQLLS…KSWVRLSAGR (228 aa)) form the Radical SAM core domain. Residues C58, C62, and C65 each coordinate [4Fe-4S] cluster. [2Fe-2S] cluster is bound by residues C102, C133, C193, and R265.

Belongs to the radical SAM superfamily. Biotin synthase family. Homodimer. The cofactor is [4Fe-4S] cluster. [2Fe-2S] cluster is required as a cofactor.

The enzyme catalyses (4R,5S)-dethiobiotin + (sulfur carrier)-SH + 2 reduced [2Fe-2S]-[ferredoxin] + 2 S-adenosyl-L-methionine = (sulfur carrier)-H + biotin + 2 5'-deoxyadenosine + 2 L-methionine + 2 oxidized [2Fe-2S]-[ferredoxin]. It functions in the pathway cofactor biosynthesis; biotin biosynthesis; biotin from 7,8-diaminononanoate: step 2/2. Catalyzes the conversion of dethiobiotin (DTB) to biotin by the insertion of a sulfur atom into dethiobiotin via a radical-based mechanism. The protein is Biotin synthase of Hyphomonas neptunium (strain ATCC 15444).